We begin with the raw amino-acid sequence, 178 residues long: Ribonuclease M5 (178 aa).

One can recognise a Toprim domain in the interval 10–103 (DGVIVCEGKT…NSTKIGVAEA (94 aa)). Glutamate 16, aspartate 62, and aspartate 64 together coordinate Mg(2+).

This sequence belongs to the ribonuclease M5 family. The cofactor is Mg(2+).

It is found in the cytoplasm. It carries out the reaction Endonucleolytic cleavage of RNA, removing 21 and 42 nucleotides, respectively, from the 5'- and 3'-termini of a 5S-rRNA precursor.. Functionally, required for correct processing of both the 5' and 3' ends of 5S rRNA precursor. Cleaves both sides of a double-stranded region yielding mature 5S rRNA in one step. The sequence is that of Ribonuclease M5 from Mycoplasma pneumoniae (strain ATCC 29342 / M129 / Subtype 1) (Mycoplasmoides pneumoniae).